Here is a 375-residue protein sequence, read N- to C-terminus: Alanine racemase (375 aa).

Lysine 41 (proton acceptor; specific for D-alanine) is an active-site residue. Lysine 41 is subject to N6-(pyridoxal phosphate)lysine. Residue arginine 141 participates in substrate binding. The active-site Proton acceptor; specific for L-alanine is the tyrosine 270. Residue methionine 317 coordinates substrate.

It belongs to the alanine racemase family. It depends on pyridoxal 5'-phosphate as a cofactor.

It carries out the reaction L-alanine = D-alanine. It participates in amino-acid biosynthesis; D-alanine biosynthesis; D-alanine from L-alanine: step 1/1. Catalyzes the interconversion of L-alanine and D-alanine. May also act on other amino acids. The protein is Alanine racemase (alr) of Lactiplantibacillus plantarum (strain ATCC BAA-793 / NCIMB 8826 / WCFS1) (Lactobacillus plantarum).